Consider the following 503-residue polypeptide: EZH inhibitory protein (503 aa).

Basic and acidic residues predominate over residues 1 to 16 (MATQSDMEKEQKHQQD). 3 disordered regions span residues 1 to 72 (MATQ…AAAA), 97 to 462 (HSDR…RSIS), and 483 to 503 (VPPE…PPEP). The segment covering 41 to 72 (PAASVTTVSSQASPSGGAALSSSTAGSSAAAA) has biased composition (low complexity). The span at 97–107 (HSDRQDCRSPH) shows a compositional bias: basic and acidic residues. The span at 184-197 (YPCSGASTSSQATQ) shows a compositional bias: polar residues. Phosphoserine is present on serine 259. Residues 345–366 (LRSRSTQQRSALLSRRSLSGSA) are compositionally biased toward low complexity. A sufficient for interaction with EZH2 region spans residues 401-409 (WHAVRMRAS). The interval 403–423 (AVRMRASSPSPPGRFFLPIPQ) is necessary and sufficient for inhibition of PRC2/EED-EZH1 and PRC2/EED-EZH2 complex activity. The span at 428 to 453 (SSSSSYASNSSSPSRSPGLSPSSPSP) shows a compositional bias: low complexity.

As to quaternary structure, interacts with PRC2/EED-EZH1 complex member EZH1 and with PRC2/EED-EZH2 complex member EZH2; the interaction blocks EZH1/EZH2 methyltransferase activity. Interacts (via C-terminus) with SUZ12 which is a member of the PRC2/EED-EZH1 and PRC2/EED-EZH2 complexes. As to expression, in testis, detected in male germ cells inside the seminiferous tubules, especially in spermatogonia and round spermatids (at protein level). In the ovary, expressed in primordial follicles and oocytes but not the external follicle cells (at protein level).

The protein resides in the nucleus. The protein localises to the cytoplasm. In terms of biological role, inhibits PRC2/EED-EZH1 and PRC2/EED-EZH2 complex function by inhibiting EZH1/EZH2 methyltransferase activity, thereby causing down-regulation of histone H3 trimethylation on 'Lys-27' (H3K27me3). Probably inhibits methyltransferase activity by limiting the stimulatory effect of cofactors such as AEBP2 and JARID2. Inhibits H3K27me3 deposition during spermatogenesis and oogenesis. This Homo sapiens (Human) protein is EZH inhibitory protein.